The chain runs to 236 residues: Glucosamine-6-phosphate deaminase (236 aa).

The active-site Proton acceptor; for enolization step is Asp62. The active-site For ring-opening step is the Asn128. His130 acts as the Proton acceptor; for ring-opening step in catalysis. Residue Glu135 is the For ring-opening step of the active site.

This sequence belongs to the glucosamine/galactosamine-6-phosphate isomerase family. NagB subfamily.

It catalyses the reaction alpha-D-glucosamine 6-phosphate + H2O = beta-D-fructose 6-phosphate + NH4(+). It functions in the pathway amino-sugar metabolism; N-acetylneuraminate degradation; D-fructose 6-phosphate from N-acetylneuraminate: step 5/5. Its function is as follows. Catalyzes the reversible isomerization-deamination of glucosamine 6-phosphate (GlcN6P) to form fructose 6-phosphate (Fru6P) and ammonium ion. This chain is Glucosamine-6-phosphate deaminase, found in Lacticaseibacillus paracasei (strain ATCC 334 / BCRC 17002 / CCUG 31169 / CIP 107868 / KCTC 3260 / NRRL B-441) (Lactobacillus paracasei).